Reading from the N-terminus, the 319-residue chain is Probable carboxylesterase 5 (319 aa).

Methionine 1 is modified (N-acetylmethionine). The Involved in the stabilization of the negatively charged intermediate by the formation of the oxyanion hole motif lies at 79 to 81 (HGG). Active-site residues include serine 163, aspartate 262, and histidine 294.

Belongs to the 'GDXG' lipolytic enzyme family. As to expression, expressed in roots, leaves, stems, flowers and siliques.

The enzyme catalyses a carboxylic ester + H2O = an alcohol + a carboxylate + H(+). Carboxylesterase acting on esters with varying acyl chain length. The protein is Probable carboxylesterase 5 (CXE5) of Arabidopsis thaliana (Mouse-ear cress).